The sequence spans 314 residues: Methionyl-tRNA formyltransferase (314 aa).

A (6S)-5,6,7,8-tetrahydrofolate-binding site is contributed by 113–116 (SLLP).

This sequence belongs to the Fmt family.

The catalysed reaction is L-methionyl-tRNA(fMet) + (6R)-10-formyltetrahydrofolate = N-formyl-L-methionyl-tRNA(fMet) + (6S)-5,6,7,8-tetrahydrofolate + H(+). Its function is as follows. Attaches a formyl group to the free amino group of methionyl-tRNA(fMet). The formyl group appears to play a dual role in the initiator identity of N-formylmethionyl-tRNA by promoting its recognition by IF2 and preventing the misappropriation of this tRNA by the elongation apparatus. This is Methionyl-tRNA formyltransferase from Ectopseudomonas mendocina (strain ymp) (Pseudomonas mendocina).